A 294-amino-acid chain; its full sequence is uncharacterized protein (294 aa).

It belongs to the glycosyltransferase 2 family.

This is an uncharacterized protein from Haemophilus influenzae (strain ATCC 51907 / DSM 11121 / KW20 / Rd).